Consider the following 585-residue polypeptide: A-type ATP synthase subunit A (585 aa).

Residue 231-238 (GPFGSGKT) coordinates ATP.

The protein belongs to the ATPase alpha/beta chains family. As to quaternary structure, has multiple subunits with at least A(3), B(3), C, D, E, F, H, I and proteolipid K(x).

The protein localises to the cell membrane. It catalyses the reaction ATP + H2O + 4 H(+)(in) = ADP + phosphate + 5 H(+)(out). Produces ATP from ADP in the presence of a proton gradient across the membrane. The archaeal alpha chain is a catalytic subunit. Functionally, component of the A-type ATP synthase that produces ATP from ADP in the presence of a proton gradient across the membrane. The A chain is the catalytic subunit. This is A-type ATP synthase subunit A from Thermococcus sp. (strain KI).